The chain runs to 333 residues: Eukaryotic translation initiation factor 3 subunit H-B (333 aa).

The region spanning 20–154 (IQIEGLVVMK…LKAYRLTPKL (135 aa)) is the MPN domain. Positions 249-295 (SKQQQQKHQYVQRRQQENAQRQSRGEPPLPEEDLTKMFKPPQPPPRM) are disordered. A compositionally biased stretch (low complexity) spans 250 to 261 (KQQQQKHQYVQR).

It belongs to the eIF-3 subunit H family. Component of the eukaryotic translation initiation factor 3 (eIF-3) complex, which is composed of 13 subunits: eif3a, eif3b, eif3c, eif3d, eif3e, eif3f, eif3g, eif3h, eif3i, eif3j, eif3k, eif3l and eif3m.

The protein resides in the cytoplasm. Component of the eukaryotic translation initiation factor 3 (eIF-3) complex, which is involved in protein synthesis of a specialized repertoire of mRNAs and, together with other initiation factors, stimulates binding of mRNA and methionyl-tRNAi to the 40S ribosome. The eIF-3 complex specifically targets and initiates translation of a subset of mRNAs involved in cell proliferation. The chain is Eukaryotic translation initiation factor 3 subunit H-B (eif3hb) from Danio rerio (Zebrafish).